We begin with the raw amino-acid sequence, 291 residues long: tRNA U34 carboxymethyltransferase (291 aa).

Carboxy-S-adenosyl-L-methionine-binding positions include Lys-61, Trp-75, Lys-80, Gly-100, 122–124 (DPS), Tyr-169, and Arg-284.

It belongs to the class I-like SAM-binding methyltransferase superfamily. CmoB family. Homotetramer.

It carries out the reaction carboxy-S-adenosyl-L-methionine + 5-hydroxyuridine(34) in tRNA = 5-carboxymethoxyuridine(34) in tRNA + S-adenosyl-L-homocysteine + H(+). Catalyzes carboxymethyl transfer from carboxy-S-adenosyl-L-methionine (Cx-SAM) to 5-hydroxyuridine (ho5U) to form 5-carboxymethoxyuridine (cmo5U) at position 34 in tRNAs. This Campylobacter lari (strain RM2100 / D67 / ATCC BAA-1060) protein is tRNA U34 carboxymethyltransferase.